A 524-amino-acid chain; its full sequence is Cytokinin dehydrogenase 7 (524 aa).

The first 22 residues, 1–22 (MAARCSIAFMIMASCLSVVVSG), serve as a signal peptide directing secretion. N42 carries N-linked (GlcNAc...) asparagine glycosylation. The FAD-binding PCMH-type domain occupies 55–233 (VAAAPEAVLH…TRARIGLMPA (179 aa)). Residues G91 and G93 each contribute to the FAD site. H94 carries the post-translational modification Pros-8alpha-FAD histidine. FAD is bound by residues S95 and Q99. An N-linked (GlcNAc...) asparagine glycan is attached at N121. Positions 157, 162, 168, 172, and 223 each coordinate FAD. 2 N-linked (GlcNAc...) asparagine glycosylation sites follow: N277 and N320. The FAD site is built by Y472, S507, and Q510.

This sequence belongs to the oxygen-dependent FAD-linked oxidoreductase family. As to quaternary structure, monomer. FAD serves as cofactor.

Its subcellular location is the secreted. It localises to the extracellular space. The catalysed reaction is N(6)-dimethylallyladenine + A + H2O = 3-methyl-2-butenal + adenine + AH2. Its function is as follows. Catalyzes the oxidation of cytokinins, a family of N(6)-substituted adenine derivatives that are plant hormones, where the substituent is an isopentenyl group. In Oryza sativa subsp. japonica (Rice), this protein is Cytokinin dehydrogenase 7 (CKX7).